Reading from the N-terminus, the 561-residue chain is Lysine--tRNA ligase (561 aa).

The Mg(2+) site is built by Glu409 and Glu416.

The protein belongs to the class-II aminoacyl-tRNA synthetase family. In terms of assembly, homodimer. Requires Mg(2+) as cofactor.

The protein localises to the cytoplasm. It carries out the reaction tRNA(Lys) + L-lysine + ATP = L-lysyl-tRNA(Lys) + AMP + diphosphate. The protein is Lysine--tRNA ligase of Nostoc punctiforme (strain ATCC 29133 / PCC 73102).